The sequence spans 130 residues: Small ribosomal subunit protein uS9 (130 aa).

Belongs to the universal ribosomal protein uS9 family.

The polypeptide is Small ribosomal subunit protein uS9 (Geobacillus sp. (strain WCH70)).